A 441-amino-acid chain; its full sequence is Ribulose bisphosphate carboxylase (441 aa).

Residue lysine 160 is the Proton acceptor of the active site. Substrate is bound at residue lysine 162. Residues lysine 186, aspartate 188, and glutamate 189 each contribute to the Mg(2+) site. Lysine 186 is subject to N6-carboxylysine. Residue histidine 278 is the Proton acceptor of the active site. Residues arginine 279, histidine 311, 364-366 (SGG), and 386-389 (QVGG) each bind substrate.

The protein belongs to the RuBisCO large chain family. Type III subfamily. Homodimer. In contrast to form I RuBisCO, the form III RuBisCO is composed solely of large subunits. Requires Mg(2+) as cofactor.

The catalysed reaction is 2 (2R)-3-phosphoglycerate + 2 H(+) = D-ribulose 1,5-bisphosphate + CO2 + H2O. It carries out the reaction D-ribulose 1,5-bisphosphate + O2 = 2-phosphoglycolate + (2R)-3-phosphoglycerate + 2 H(+). Reversibly inhibited by O(2). Catalyzes the addition of molecular CO(2) and H(2)O to ribulose 1,5-bisphosphate (RuBP), generating two molecules of 3-phosphoglycerate (3-PGA). Functions in an archaeal AMP degradation pathway, together with AMP phosphorylase and R15P isomerase. The chain is Ribulose bisphosphate carboxylase from Archaeoglobus fulgidus (strain ATCC 49558 / DSM 4304 / JCM 9628 / NBRC 100126 / VC-16).